The chain runs to 599 residues: Cytosolic Fe-S cluster assembly factor nar1 (599 aa).

Residues C20, C62, C65, C68, C210, C265, C468, and C472 each contribute to the [4Fe-4S] cluster site.

The protein belongs to the NARF family.

In terms of biological role, component of the cytosolic Fe/S protein assembly machinery. Required for maturation of extramitochondrial Fe/S proteins. May play a role in the transfer of pre-assembled Fe/S clusters to target apoproteins. This is Cytosolic Fe-S cluster assembly factor nar1 (nar1) from Aspergillus terreus (strain NIH 2624 / FGSC A1156).